The following is a 116-amino-acid chain: Prefoldin subunit beta (116 aa).

This sequence belongs to the prefoldin subunit beta family. Heterohexamer of two alpha and four beta subunits.

The protein resides in the cytoplasm. Its function is as follows. Molecular chaperone capable of stabilizing a range of proteins. Seems to fulfill an ATP-independent, HSP70-like function in archaeal de novo protein folding. The chain is Prefoldin subunit beta from Thermococcus onnurineus (strain NA1).